The chain runs to 246 residues: Protein YIPF4 (246 aa).

Topologically, residues 1–115 (MQPPGPPPAY…FNRQVVRDNP (115 aa)) are cytoplasmic. The chain crosses the membrane as a helical span at residues 116–136 (DFWGPLAVVLFFSMISLYGQF). Topologically, residues 137–140 (RVVS) are lumenal. The helical transmembrane segment at 141-161 (WIITIWIFGSLTIFLLARVLG) threads the bilayer. Residues 162-168 (GEVAYGQ) lie on the Cytoplasmic side of the membrane. Residues 169-189 (VLGVIGYSLLPLIVIAPILLV) form a helical membrane-spanning segment. The Lumenal segment spans residues 190–197 (VGSFEMVS). Residues 198 to 218 (TLIKLFGVFWAAYSAASLLVG) form a helical membrane-spanning segment. At 219 to 225 (EEFKTKK) the chain is on the cytoplasmic side. The chain crosses the membrane as a helical span at residues 226–246 (PLLIYPIFLLYIYFLSLYTGV).

Belongs to the YIP1 family. As to quaternary structure, interacts with YIPF3 and YIPF5.

Its subcellular location is the golgi apparatus. It is found in the cis-Golgi network membrane. Functionally, involved in the maintenance of the Golgi structure. This chain is Protein YIPF4 (Yipf4), found in Mus musculus (Mouse).